The primary structure comprises 398 residues: MKNKWLSFFSGKVQLELTGRGIERLLNECTRQGIPVFHVKKKKEAVSLYIQLQDVHAFRRVRSKFKCKARFINRKGFPFLLLKSKLNIGFTIGFAIFFILLFLLSNMVWKIDVTGAKPETEHQMRQHLNEIGVKKGRLQFLMMSPEKIQKSLTNGIDNITWVGVDLKGTTIHMKVVEKNEPEKEKYVSPRNIVAKKKATITRMFVQKGQPMAAIHDHVEKGQLLVSGLIGSEDHQQEVASKAEIYGETWYRSEVTVPLETLFNVYTGKVRTKHKLSFGSLAIPIWGMTFKKEELKHPKTEQEKHSLHFLGFKLPVSYVKEQTRESEEALRKYTKEEAVQEGIKLGKQDVEDKIGENGEVKSEKVLHQTVENGKVKLIILYQVIEDIVQTTPIVRETEE.

Residues 88 to 108 (IGFTIGFAIFFILLFLLSNMV) form a helical membrane-spanning segment.

This sequence to B.megaterium SpoIV.

Its subcellular location is the cell membrane. This is an uncharacterized protein from Bacillus subtilis (strain 168).